Consider the following 515-residue polypeptide: Fatty acyl-CoA reductase 1 (515 aa).

The Cytoplasmic portion of the chain corresponds to 1–465 (MLSIPEFYQG…ARKHLNKLRN (465 aa)). Residues 466–484 (IRYGFNTILVVLIWRVFIA) form a helical membrane-spanning segment. The Peroxisomal portion of the chain corresponds to 485–515 (RSQMARNIWYFVVSMCFKFLSYFRASSTMRY).

This sequence belongs to the fatty acyl-CoA reductase family.

Its subcellular location is the peroxisome membrane. It carries out the reaction a long-chain fatty acyl-CoA + 2 NADPH + 2 H(+) = a long-chain primary fatty alcohol + 2 NADP(+) + CoA. The catalysed reaction is hexadecanoyl-CoA + 2 NADPH + 2 H(+) = hexadecan-1-ol + 2 NADP(+) + CoA. The enzyme catalyses octadecanoyl-CoA + 2 NADPH + 2 H(+) = octadecan-1-ol + 2 NADP(+) + CoA. It catalyses the reaction (9Z)-octadecenoyl-CoA + 2 NADPH + 2 H(+) = (9Z)-octadecen-1-ol + 2 NADP(+) + CoA. It carries out the reaction (9Z,12Z)-octadecadienoyl-CoA + 2 NADPH + 2 H(+) = (9Z,12Z)-octadecadien-1-ol + 2 NADP(+) + CoA. The catalysed reaction is eicosanoyl-CoA + 2 NADPH + 2 H(+) = eicosan-1-ol + 2 NADP(+) + CoA. The enzyme catalyses 16-methylheptadecanoyl-CoA + 2 NADPH + 2 H(+) = 16-methylheptadecan-1-ol + 2 NADP(+) + CoA. It catalyses the reaction 18-methylnonadecanoyl-CoA + 2 NADPH + 2 H(+) = 18-methylnonadecan-1-ol + 2 NADP(+) + CoA. In terms of biological role, catalyzes the reduction of saturated and unsaturated C16 or C18 fatty acyl-CoA to fatty alcohols. It plays an essential role in the production of ether lipids/plasmalogens which synthesis requires fatty alcohols. In parallel, it is also required for wax monoesters production since fatty alcohols also constitute a substrate for their synthesis. The chain is Fatty acyl-CoA reductase 1 (far1) from Xenopus laevis (African clawed frog).